Here is a 367-residue protein sequence, read N- to C-terminus: N-acetylmuramoyl-L-alanine amidase BlyA (367 aa).

The N-acetylmuramoyl-L-alanine amidase domain maps to 24–158; the sequence is VKKCVLHYTA…DITHKNCPAP (135 aa). A disordered region spans residues 178–204; that stretch reads SGKSVSKASPTKPTTSSPSSSSAVSGS. Positions 180–204 are enriched in low complexity; sequence KSVSKASPTKPTTSSPSSSSAVSGS. SH3b domains lie at 202–271 and 298–367; these read SGSL…YVDV and GKIK…GSTI.

The protein belongs to the N-acetylmuramoyl-L-alanine amidase 2 family.

The protein resides in the secreted. The enzyme catalyses Hydrolyzes the link between N-acetylmuramoyl residues and L-amino acid residues in certain cell-wall glycopeptides.. Autolysins are involved in some important biological processes such as cell separation, cell-wall turnover, competence for genetic transformation, formation of the flagella and sporulation. Involved in prophage SP-beta-mediated cell lysis. The protein is N-acetylmuramoyl-L-alanine amidase BlyA (blyA) of Bacillus subtilis (strain 168).